Reading from the N-terminus, the 552-residue chain is HTH-type transcriptional regulator SgrR (552 aa).

One can recognise an HTH marR-type domain in the interval 1-116; that stretch reads MPSGRLQQQF…LISHLGRSFR (116 aa). The H-T-H motif DNA-binding region spans 26 to 49; the sequence is LNELADLLNCSRRHMRTLLNTMQA. Residues 163–493 form a solute-binding region; that stretch reads ELEADIAHHW…RDWQDDAAQW (331 aa).

Its function is as follows. Activates the small RNA gene sgrS under glucose-phosphate stress conditions as well as yfdZ. Represses its own transcription under both stress and non-stress conditions. Might act as a sensor of the intracellular accumulation of phosphoglucose by binding these molecules in its C-terminal solute-binding domain. The sequence is that of HTH-type transcriptional regulator SgrR from Salmonella typhi.